Reading from the N-terminus, the 686-residue chain is XK-related protein 5 (686 aa).

Transmembrane regions (helical) follow at residues 33-53 (LLWG…QALS), 205-225 (HFWV…WLVA), 239-259 (LFNL…WDSP), 265-285 (VTFY…ATDF), and 297-317 (IAGV…YYSL). 3 disordered regions span residues 339–387 (GDKT…PPEA), 448–468 (ALSA…LENS), and 490–592 (FASD…APFP). The segment covering 340–359 (DKTERRDSPRATDLAGKRTE) has biased composition (basic and acidic residues). Composition is skewed to polar residues over residues 450-468 (SAQQ…LENS) and 490-509 (FASD…TQGE). Gly residues predominate over residues 523–536 (QGKGTGGQQRGGEG). A compositionally biased stretch (polar residues) spans 550–567 (VATSSQQEGSPATLQTAH).

The protein belongs to the XK family.

It is found in the cell membrane. The protein is XK-related protein 5 of Homo sapiens (Human).